The sequence spans 456 residues: RuvB-like helicase 1 (456 aa).

An ATP-binding site is contributed by 70–77 (GPPGTGKT).

The protein belongs to the RuvB family. In terms of assembly, forms homohexameric rings. May form a dodecamer with rept made of two stacked hexameric rings. Component of the chromatin remodeling Ino80 complex. Interacts with Myc and rept. As to expression, higher expression occurs in primordia of mesoderm, anterior and posterior midgut and cephalic furrow early in gastrulation, as well as in endoderm and mesoderm lineages during germ band extension. Later in development expression is only maintained in endoderm cells. Expressed in thoracic and abdominal segment neural precursors of all embryonic chordotonal organs.

It is found in the nucleus. It carries out the reaction ATP + H2O = ADP + phosphate + H(+). Acts as a transcriptional coactivator in Wg signaling caused by altered arm signaling. Pont and rept interfere antagonistically with nuclear arm signaling function, and are required to enhance or reduce arm activity, respectively. Also an essential cofactor for the normal function of Myc; required for cellular proliferation and growth. In terms of biological role, proposed core component of the chromatin remodeling Ino80 complex which is involved in transcriptional regulation, DNA replication and probably DNA repair. The polypeptide is RuvB-like helicase 1 (Drosophila melanogaster (Fruit fly)).